The sequence spans 440 residues: Protein arginine N-methyltransferase 2 (440 aa).

The interval 147-194 (LSSGSEDGDEEMEVQQDDDEEAPQLVSTEDVEPTVEEPKFIPPDAKEK) is disordered. Residues 152–168 (EDGDEEMEVQQDDDEEA) are compositionally biased toward acidic residues. Over residues 182-194 (EEPKFIPPDAKEK) the composition is skewed to basic and acidic residues. The RMT2 domain occupies 192–440 (KEKQVTSEEY…RYAVGTSNRL (249 aa)). S-adenosyl-L-methionine-binding positions include Tyr-201, Met-230, 252–257 (FGMGIV), 273–275 (EAH), 310–311 (WQ), and Asp-330.

It belongs to the class I-like SAM-binding methyltransferase superfamily. RMT2 methyltransferase family. In terms of assembly, monomer.

The protein localises to the cytoplasm. It is found in the nucleus. Its function is as follows. S-adenosyl-L-methionine-dependent protein-arginine N-methyltransferase that methylates the delta-nitrogen atom of arginine residues to form N5-methylarginine (type IV) in target proteins. Monomethylates ribosomal protein L12. The protein is Protein arginine N-methyltransferase 2 of Gibberella zeae (strain ATCC MYA-4620 / CBS 123657 / FGSC 9075 / NRRL 31084 / PH-1) (Wheat head blight fungus).